Reading from the N-terminus, the 158-residue chain is MNSQSFKNFPSLKFISKKRRKERLLMVLLCLFIMAITTGLIVYAMRNTANFFRTPSEITKEDILTGRVLRLGGIVEKGTVEHNGEMQVTFFVIDHLKHEKVVFNGLLPDLFREGQSVIVEGYFDKQGLFIGKRVLAKHDETYMSKETADRLKKHHDIK.

Residues 1–23 (MNSQSFKNFPSLKFISKKRRKER) are Cytoplasmic-facing. A helical; Signal-anchor for type II membrane protein membrane pass occupies residues 24–44 (LLMVLLCLFIMAITTGLIVYA). The Periplasmic portion of the chain corresponds to 45–158 (MRNTANFFRT…DRLKKHHDIK (114 aa)). The heme site is built by His138 and Tyr142.

Belongs to the CcmE/CycJ family.

Its subcellular location is the cell inner membrane. In terms of biological role, heme chaperone required for the biogenesis of c-type cytochromes. Transiently binds heme delivered by CcmC and transfers the heme to apo-cytochromes in a process facilitated by CcmF and CcmH. This Bartonella bacilliformis (strain ATCC 35685 / KC583 / Herrer 020/F12,63) protein is Cytochrome c-type biogenesis protein CcmE.